Here is a 148-residue protein sequence, read N- to C-terminus: Leghemoglobin 2 (148 aa).

The 147-residue stretch at 2–148 (GFTEKQEALV…LSAAIKKAMS (147 aa)) folds into the Globin domain. Tyr30 bears the Nitrated tyrosine mark. Residue Ser45 coordinates heme b. The residue at position 45 (Ser45) is a Phosphoserine. His63 is an O2 binding site. Heme b-binding residues include Lys66, His95, and Lys98. Position 136 is a nitrated tyrosine (Tyr136).

This sequence belongs to the plant globin family. As to quaternary structure, monomer. Post-translationally, nitrated in effective nodules and particularly in hypoxic conditions; this mechanism may play a protective role in the symbiosis by buffering toxic peroxynitrite NO(2)(-). Nitration level decrease during nodule senescence. In terms of processing, phosphorylation at Ser-45 disrupts the molecular environment of its porphyrin ring oxygen binding pocket, thus leading to a reduced oxygen consumption and to the delivery of oxygen O(2) to symbiosomes. As to expression, stem nodules.

Its subcellular location is the cytoplasm. It localises to the cytosol. The protein localises to the nucleus. Leghemoglobin that reversibly binds oxygen O(2) through a pentacoordinated heme iron. In stem nodules, facilitates the diffusion of oxygen to the bacteroids while preventing the bacterial nitrogenase from being inactivated by buffering dioxygen, nitric oxide and carbon monoxide, and promoting the formation of reactive oxygen species (ROS, e.g. H(2)O(2)). This role is essential for symbiotic nitrogen fixation (SNF). The polypeptide is Leghemoglobin 2 (Sesbania rostrata).